The sequence spans 86 residues: Small ribosomal subunit protein bS16 (86 aa).

The protein belongs to the bacterial ribosomal protein bS16 family.

In Thermoanaerobacter pseudethanolicus (strain ATCC 33223 / 39E) (Clostridium thermohydrosulfuricum), this protein is Small ribosomal subunit protein bS16.